The chain runs to 276 residues: Shikimate dehydrogenase (NADP(+)) (276 aa).

Shikimate is bound by residues 15–17 (SKS) and T62. Catalysis depends on K66, which acts as the Proton acceptor. Residue E78 coordinates NADP(+). 2 residues coordinate shikimate: N87 and D103. NADP(+) is bound by residues 128–132 (GAGGA) and I217. Y219 provides a ligand contact to shikimate. G240 serves as a coordination point for NADP(+).

This sequence belongs to the shikimate dehydrogenase family. In terms of assembly, homodimer.

The enzyme catalyses shikimate + NADP(+) = 3-dehydroshikimate + NADPH + H(+). The protein operates within metabolic intermediate biosynthesis; chorismate biosynthesis; chorismate from D-erythrose 4-phosphate and phosphoenolpyruvate: step 4/7. Involved in the biosynthesis of the chorismate, which leads to the biosynthesis of aromatic amino acids. Catalyzes the reversible NADPH linked reduction of 3-dehydroshikimate (DHSA) to yield shikimate (SA). This chain is Shikimate dehydrogenase (NADP(+)), found in Lysinibacillus sphaericus (strain C3-41).